Reading from the N-terminus, the 57-residue chain is Small ribosomal subunit protein eS27 (57 aa).

Cys10, Cys13, Cys29, and Cys32 together coordinate Zn(2+). Residues 10–32 form a C4-type zinc finger; sequence CGDCENEQVVFGKASSVVSCAVC.

It belongs to the eukaryotic ribosomal protein eS27 family. As to quaternary structure, part of the 30S ribosomal subunit. Zn(2+) serves as cofactor.

The chain is Small ribosomal subunit protein eS27 from Halorubrum lacusprofundi (strain ATCC 49239 / DSM 5036 / JCM 8891 / ACAM 34).